The sequence spans 225 residues: Probable polyketide biosynthesis zinc-dependent hydrolase BaeB (225 aa).

Zn(2+) contacts are provided by His62, His64, Asp66, His67, His123, Asp140, and His181.

It belongs to the metallo-beta-lactamase superfamily. It depends on Zn(2+) as a cofactor.

The protein resides in the cytoplasm. It participates in antibiotic biosynthesis; bacillaene biosynthesis. In terms of biological role, probably involved in some intermediate steps for the synthesis of the antibiotic polyketide bacillaene which is involved in secondary metabolism. This is Probable polyketide biosynthesis zinc-dependent hydrolase BaeB (baeB) from Bacillus velezensis (strain DSM 23117 / BGSC 10A6 / LMG 26770 / FZB42) (Bacillus amyloliquefaciens subsp. plantarum).